Consider the following 238-residue polypeptide: Dolichyldiphosphatase 1 (238 aa).

The next 4 membrane-spanning stretches (helical) occupy residues 33–53 (LAYLSLGPVFVIVGFVTLIIF), 100–120 (PSSHSQFMWFFSVYSFLFLYL), 130–150 (FLDLLWRHVLSLGLLAAAFLV), and 162–182 (WSQVLYGGIAGGLMAVAWFIF).

This sequence belongs to the dolichyldiphosphatase family.

The protein resides in the endoplasmic reticulum membrane. It catalyses the reaction a di-trans,poly-cis-dolichyl diphosphate + H2O = a di-trans,poly-cis-dolichyl phosphate + phosphate + H(+). It functions in the pathway protein modification; protein glycosylation. Functionally, required for efficient N-glycosylation. Necessary for maintaining optimal levels of dolichol-linked oligosaccharides. Hydrolyzes dolichyl pyrophosphate at a very high rate and dolichyl monophosphate at a much lower rate. Does not act on phosphatidate. The polypeptide is Dolichyldiphosphatase 1 (DOLPP1) (Plecturocebus moloch (Dusky titi monkey)).